The primary structure comprises 637 residues: Nucleoside triphosphatase I (637 aa).

Residues 43–205 form the Helicase ATP-binding domain; that stretch reads FLGLNSMNSI…QMLVNLLRPG (163 aa). ATP is bound at residue 56-63; the sequence is QETGVGKT. Positions 142 to 145 match the DEXH box motif; it reads DECH. The Helicase C-terminal domain occupies 358-537; that stretch reads ELYNYLYEHS…QLYKVFKHSS (180 aa). The binding to the cap-specific mRNA (nucleoside-2'-O-)-methyltransferase stretch occupies residues 459 to 526; sequence DIFILDMTWN…DIIQSKSKEF (68 aa).

The protein belongs to the helicase family. NPH I subfamily. Monomer. Interacts (via C-terminus) with RAP94 (via N-terminus). Interacts with the cap-specific mRNA (nucleoside-2'-O-)-methyltransferase.

The protein resides in the virion. It carries out the reaction a ribonucleoside 5'-triphosphate + H2O = a ribonucleoside 5'-diphosphate + phosphate + H(+). Its function is as follows. DNA-dependent ATPase required for providing the needed energy to achieve the termination of early transcripts. Acts in concert with the RAP94 subunit of the virion RNA polymerase and the capping enzyme/VTF to catalyze release of UUUUUNU-containing nascent RNA from the elongation complex. NPH-I must bind ssDNA in order to exhibit ATPase activity. This chain is Nucleoside triphosphatase I (NPH1), found in Vertebrata (FPV).